We begin with the raw amino-acid sequence, 363 residues long: Holliday junction branch migration complex subunit RuvB (363 aa).

The interval 1–44 (MAIKRNQGHGLPPKRDPALGRDALTTSQALPEDQEQSANEDRIR) is disordered. The segment at 13 to 204 (PKRDPALGRD…FGLIQRLRFY (192 aa)) is large ATPase domain (RuvB-L). ATP contacts are provided by isoleucine 43, arginine 44, glycine 85, lysine 88, threonine 89, threonine 90, arginine 194, tyrosine 204, and arginine 241. Threonine 89 is a binding site for Mg(2+). The small ATPAse domain (RuvB-S) stretch occupies residues 205–275 (EVDELIAIVH…VAATALDLYN (71 aa)). The tract at residues 278–363 (ALGLDWTDRL…EQSTQLDFLP (86 aa)) is head domain (RuvB-H). Positions 333 and 338 each coordinate DNA.

Belongs to the RuvB family. As to quaternary structure, homohexamer. Forms an RuvA(8)-RuvB(12)-Holliday junction (HJ) complex. HJ DNA is sandwiched between 2 RuvA tetramers; dsDNA enters through RuvA and exits via RuvB. An RuvB hexamer assembles on each DNA strand where it exits the tetramer. Each RuvB hexamer is contacted by two RuvA subunits (via domain III) on 2 adjacent RuvB subunits; this complex drives branch migration. In the full resolvosome a probable DNA-RuvA(4)-RuvB(12)-RuvC(2) complex forms which resolves the HJ.

The protein localises to the cytoplasm. It catalyses the reaction ATP + H2O = ADP + phosphate + H(+). Its function is as follows. The RuvA-RuvB-RuvC complex processes Holliday junction (HJ) DNA during genetic recombination and DNA repair, while the RuvA-RuvB complex plays an important role in the rescue of blocked DNA replication forks via replication fork reversal (RFR). RuvA specifically binds to HJ cruciform DNA, conferring on it an open structure. The RuvB hexamer acts as an ATP-dependent pump, pulling dsDNA into and through the RuvAB complex. RuvB forms 2 homohexamers on either side of HJ DNA bound by 1 or 2 RuvA tetramers; 4 subunits per hexamer contact DNA at a time. Coordinated motions by a converter formed by DNA-disengaged RuvB subunits stimulates ATP hydrolysis and nucleotide exchange. Immobilization of the converter enables RuvB to convert the ATP-contained energy into a lever motion, pulling 2 nucleotides of DNA out of the RuvA tetramer per ATP hydrolyzed, thus driving DNA branch migration. The RuvB motors rotate together with the DNA substrate, which together with the progressing nucleotide cycle form the mechanistic basis for DNA recombination by continuous HJ branch migration. Branch migration allows RuvC to scan DNA until it finds its consensus sequence, where it cleaves and resolves cruciform DNA. In Picosynechococcus sp. (strain ATCC 27264 / PCC 7002 / PR-6) (Agmenellum quadruplicatum), this protein is Holliday junction branch migration complex subunit RuvB.